Here is a 211-residue protein sequence, read N- to C-terminus: ATP phosphoribosyltransferase (211 aa).

The protein belongs to the ATP phosphoribosyltransferase family. Short subfamily. In terms of assembly, heteromultimer composed of HisG and HisZ subunits.

Its subcellular location is the cytoplasm. It catalyses the reaction 1-(5-phospho-beta-D-ribosyl)-ATP + diphosphate = 5-phospho-alpha-D-ribose 1-diphosphate + ATP. The protein operates within amino-acid biosynthesis; L-histidine biosynthesis; L-histidine from 5-phospho-alpha-D-ribose 1-diphosphate: step 1/9. In terms of biological role, catalyzes the condensation of ATP and 5-phosphoribose 1-diphosphate to form N'-(5'-phosphoribosyl)-ATP (PR-ATP). Has a crucial role in the pathway because the rate of histidine biosynthesis seems to be controlled primarily by regulation of HisG enzymatic activity. The polypeptide is ATP phosphoribosyltransferase (Bacillus cereus (strain B4264)).